A 1177-amino-acid chain; its full sequence is Transcription-repair-coupling factor (1177 aa).

One can recognise a Helicase ATP-binding domain in the interval 638 to 799; sequence DMERERPMDR…MLGVRDLSVI (162 aa). 651–658 is an ATP binding site; that stretch reads GDVGYGKT. The DEEQ box motif lies at 752–755; it reads DEEQ. The region spanning 820-974 is the Helicase C-terminal domain; sequence LVREAIEREL…GFKIAMRDLT (155 aa).

The protein in the N-terminal section; belongs to the UvrB family. In the C-terminal section; belongs to the helicase family. RecG subfamily.

Its subcellular location is the cytoplasm. In terms of biological role, couples transcription and DNA repair by recognizing RNA polymerase (RNAP) stalled at DNA lesions. Mediates ATP-dependent release of RNAP and its truncated transcript from the DNA, and recruitment of nucleotide excision repair machinery to the damaged site. Probably required to repair non-bulky DNA lesions. This is Transcription-repair-coupling factor from Bacillus subtilis (strain 168).